The primary structure comprises 1203 residues: DNA-directed RNA polymerase subunit beta (1203 aa).

A compositionally biased stretch (basic and acidic residues) spans alanine 1174–alanine 1195. The disordered stretch occupies residues alanine 1174–glutamate 1203.

This sequence belongs to the RNA polymerase beta chain family. As to quaternary structure, the RNAP catalytic core consists of 2 alpha, 1 beta, 1 beta' and 1 omega subunit. When a sigma factor is associated with the core the holoenzyme is formed, which can initiate transcription.

The catalysed reaction is RNA(n) + a ribonucleoside 5'-triphosphate = RNA(n+1) + diphosphate. Its function is as follows. DNA-dependent RNA polymerase catalyzes the transcription of DNA into RNA using the four ribonucleoside triphosphates as substrates. The chain is DNA-directed RNA polymerase subunit beta from Streptococcus pneumoniae (strain JJA).